The chain runs to 691 residues: DNA topoisomerase 1 (691 aa).

Residues Asp3–Thr114 form the Toprim domain. Residues Glu9 and Asp82 each coordinate Mg(2+). Residues Asn129–Val558 enclose the Topo IA-type catalytic domain. Positions Ser163–Gln168 are interaction with DNA. The active-site O-(5'-phospho-DNA)-tyrosine intermediate is Tyr298. C4-type zinc fingers lie at residues Cys579 to Cys605, Cys619 to Cys647, and Cys660 to Cys683.

Belongs to the type IA topoisomerase family. In terms of assembly, monomer. Interacts with the RNA polymerase core. Mg(2+) is required as a cofactor.

It carries out the reaction ATP-independent breakage of single-stranded DNA, followed by passage and rejoining.. In terms of biological role, releases the supercoiling and torsional tension of DNA, which is introduced during the DNA replication and transcription, by transiently cleaving and rejoining one strand of the DNA duplex. Introduces a single-strand break via transesterification at a target site in duplex DNA. The scissile phosphodiester is attacked by the catalytic tyrosine of the enzyme, resulting in the formation of a DNA-(5'-phosphotyrosyl)-enzyme intermediate and the expulsion of a 3'-OH DNA strand. The free DNA strand then undergoes passage around the unbroken strand, thus removing DNA supercoils. Finally, in the religation step, the DNA 3'-OH attacks the covalent intermediate to expel the active-site tyrosine and restore the DNA phosphodiester backbone. The polypeptide is DNA topoisomerase 1 (Bacillus subtilis (strain 168)).